A 450-amino-acid chain; its full sequence is Chromosomal replication initiator protein DnaA (450 aa).

The interval methionine 1 to leucine 84 is domain I, interacts with DnaA modulators. The domain II stretch occupies residues leucine 84 to serine 109. The segment at aspartate 110–alanine 328 is domain III, AAA+ region. Glycine 154, glycine 156, lysine 157, and threonine 158 together coordinate ATP. Positions asparagine 329–lysine 450 are domain IV, binds dsDNA.

It belongs to the DnaA family. As to quaternary structure, oligomerizes as a right-handed, spiral filament on DNA at oriC.

It localises to the cytoplasm. Functionally, plays an essential role in the initiation and regulation of chromosomal replication. ATP-DnaA binds to the origin of replication (oriC) to initiate formation of the DNA replication initiation complex once per cell cycle. Binds the DnaA box (a 9 base pair repeat at the origin) and separates the double-stranded (ds)DNA. Forms a right-handed helical filament on oriC DNA; dsDNA binds to the exterior of the filament while single-stranded (ss)DNA is stabiized in the filament's interior. The ATP-DnaA-oriC complex binds and stabilizes one strand of the AT-rich DNA unwinding element (DUE), permitting loading of DNA polymerase. After initiation quickly degrades to an ADP-DnaA complex that is not apt for DNA replication. Binds acidic phospholipids. This is Chromosomal replication initiator protein DnaA from Streptococcus equi subsp. zooepidemicus (strain MGCS10565).